The sequence spans 102 residues: Co-chaperonin GroES (102 aa).

The protein belongs to the GroES chaperonin family. As to quaternary structure, heptamer of 7 subunits arranged in a ring. Interacts with the chaperonin GroEL.

It localises to the cytoplasm. Functionally, together with the chaperonin GroEL, plays an essential role in assisting protein folding. The GroEL-GroES system forms a nano-cage that allows encapsulation of the non-native substrate proteins and provides a physical environment optimized to promote and accelerate protein folding. GroES binds to the apical surface of the GroEL ring, thereby capping the opening of the GroEL channel. The protein is Co-chaperonin GroES of Streptomyces griseus subsp. griseus (strain JCM 4626 / CBS 651.72 / NBRC 13350 / KCC S-0626 / ISP 5235).